Here is a 97-residue protein sequence, read N- to C-terminus: MLTIKANLRIYHKKGATRRLRKQNKCPAVIYNRGQEPSIPIILNQNDILHPEAVIQLYKNNVILLFIENQQPITVKVQELQYHPFKSKLIHIDFTRV.

It belongs to the bacterial ribosomal protein bL25 family. As to quaternary structure, part of the 50S ribosomal subunit; part of the 5S rRNA/L5/L18/L25 subcomplex. Contacts the 5S rRNA. Binds to the 5S rRNA independently of L5 and L18.

In terms of biological role, this is one of the proteins that binds to the 5S RNA in the ribosome where it forms part of the central protuberance. This Blochmanniella pennsylvanica (strain BPEN) protein is Large ribosomal subunit protein bL25.